Reading from the N-terminus, the 673-residue chain is Centrosomal protein kizuna (673 aa).

Disordered regions lie at residues 175–207 (TEHK…TDSC), 255–413 (GSNT…ALKL), 432–480 (QTLS…NSVK), 494–516 (ECGR…ILND), and 613–673 (SEAS…DFYD). Composition is skewed to polar residues over residues 196–207 (QTAQSSNVTDSC) and 255–266 (GSNTRHGKSNLS). Basic and acidic residues-rich tracts occupy residues 267–293 (EGKK…DLKC) and 303–316 (ILTR…EKRA). Residues serine 317 and serine 321 each carry the phosphoserine modification. Residues 331-357 (SENKWSQEKHSPWEGVSDHLAHREPKS) are compositionally biased toward basic and acidic residues. Threonine 379 bears the Phosphothreonine; by PLK1 mark. Over residues 471–480 (TLKEHDNSVK) the composition is skewed to basic and acidic residues. Composition is skewed to low complexity over residues 503-512 (SSESSCSLPS) and 613-625 (SEAS…GSPL). Residues serine 647, serine 650, and serine 652 each carry the phosphoserine modification.

Belongs to the kizuna family. In terms of assembly, interacts with AKAP9, CEP72, ODF2, PCNT and TUBGCP2. In terms of processing, phosphorylation at Thr-379 by PLK1 is not needed for centrosomal localization or pericentriolar material expansion but is indispensable for spindle-pole stabilization.

The protein localises to the cytoplasm. It is found in the cytoskeleton. Its subcellular location is the microtubule organizing center. The protein resides in the centrosome. It localises to the cilium basal body. Centrosomal protein required for establishing a robust mitotic centrosome architecture that can endure the forces that converge on the centrosomes during spindle formation. Required for stabilizing the expanded pericentriolar material around the centriole. This chain is Centrosomal protein kizuna (KIZ), found in Homo sapiens (Human).